Here is a 367-residue protein sequence, read N- to C-terminus: Undecaprenyl-phosphate alpha-N-acetylglucosaminyl 1-phosphate transferase (367 aa).

9 consecutive transmembrane segments (helical) span residues 3 to 23 (LLTA…FIFL), 45 to 65 (GVIP…MFGL), 69 to 89 (YIPH…VGAM), 129 to 149 (WELV…WAAI), 158 to 178 (IDGL…LILW), 187 to 207 (MWCF…LGIL), 213 to 233 (VFMG…LLLE), 242 to 262 (ISPV…VAIM), and 318 to 338 (VPEW…GYCI).

This sequence belongs to the glycosyltransferase 4 family. WecA subfamily. Requires Mg(2+) as cofactor. Mn(2+) is required as a cofactor.

The protein resides in the cell inner membrane. The enzyme catalyses di-trans,octa-cis-undecaprenyl phosphate + UDP-N-acetyl-alpha-D-glucosamine = N-acetyl-alpha-D-glucosaminyl-di-trans,octa-cis-undecaprenyl diphosphate + UMP. Its pathway is bacterial outer membrane biogenesis; LPS O-antigen biosynthesis. It participates in bacterial outer membrane biogenesis; enterobacterial common antigen biosynthesis. Its activity is regulated as follows. Inhibited by tunicamycin. Catalyzes the transfer of the GlcNAc-1-phosphate moiety from UDP-GlcNAc onto the carrier lipid undecaprenyl phosphate (C55-P), yielding GlcNAc-pyrophosphoryl-undecaprenyl (GlcNAc-PP-C55). This Salmonella typhimurium (strain LT2 / SGSC1412 / ATCC 700720) protein is Undecaprenyl-phosphate alpha-N-acetylglucosaminyl 1-phosphate transferase.